We begin with the raw amino-acid sequence, 361 residues long: Phospho-N-acetylmuramoyl-pentapeptide-transferase (361 aa).

Helical transmembrane passes span 28-48, 73-93, 98-118, 132-152, 168-188, 199-219, 235-255, 263-283, 288-308, and 338-358; these read LAIL…IRWL, TMGG…WGNL, MWIM…DDYL, YKLF…YFNP, WLID…VGSS, GLAA…LYIS, GTGE…GFLW, VFMG…LAVI, IVLA…ILQV, and KVIV…LLTL.

This sequence belongs to the glycosyltransferase 4 family. MraY subfamily. Mg(2+) is required as a cofactor.

The protein localises to the cell inner membrane. It carries out the reaction UDP-N-acetyl-alpha-D-muramoyl-L-alanyl-gamma-D-glutamyl-meso-2,6-diaminopimeloyl-D-alanyl-D-alanine + di-trans,octa-cis-undecaprenyl phosphate = di-trans,octa-cis-undecaprenyl diphospho-N-acetyl-alpha-D-muramoyl-L-alanyl-D-glutamyl-meso-2,6-diaminopimeloyl-D-alanyl-D-alanine + UMP. It functions in the pathway cell wall biogenesis; peptidoglycan biosynthesis. Catalyzes the initial step of the lipid cycle reactions in the biosynthesis of the cell wall peptidoglycan: transfers peptidoglycan precursor phospho-MurNAc-pentapeptide from UDP-MurNAc-pentapeptide onto the lipid carrier undecaprenyl phosphate, yielding undecaprenyl-pyrophosphoryl-MurNAc-pentapeptide, known as lipid I. In Thermodesulfovibrio yellowstonii (strain ATCC 51303 / DSM 11347 / YP87), this protein is Phospho-N-acetylmuramoyl-pentapeptide-transferase.